The following is a 467-amino-acid chain: Glycosyl hydrolase family 109 protein (467 aa).

The segment at residues 1 to 31 (MKNFNRRAFLKAAGATTAGLVTSGLILPASA) is a signal peptide (tat-type signal). NAD(+)-binding positions include 66–67 (QR), D88, 137–140 (WQWH), 157–158 (EV), and N186. Substrate-binding positions include Y215, R234, 246–249 (YPTH), and Y328. Y246 provides a ligand contact to NAD(+).

This sequence belongs to the Gfo/Idh/MocA family. Glycosyl hydrolase 109 subfamily. It depends on NAD(+) as a cofactor. Predicted to be exported by the Tat system. The position of the signal peptide cleavage has not been experimentally proven.

Functionally, glycosidase. The polypeptide is Glycosyl hydrolase family 109 protein (Shewanella woodyi (strain ATCC 51908 / MS32)).